Consider the following 141-residue polypeptide: Large ribosomal subunit protein uL11 (141 aa).

Belongs to the universal ribosomal protein uL11 family. In terms of assembly, part of the ribosomal stalk of the 50S ribosomal subunit. Interacts with L10 and the large rRNA to form the base of the stalk. L10 forms an elongated spine to which L12 dimers bind in a sequential fashion forming a multimeric L10(L12)X complex. One or more lysine residues are methylated.

Forms part of the ribosomal stalk which helps the ribosome interact with GTP-bound translation factors. The protein is Large ribosomal subunit protein uL11 of Leptospira biflexa serovar Patoc (strain Patoc 1 / Ames).